Reading from the N-terminus, the 138-residue chain is Acidic phospholipase A2 Cvv-E6f (138 aa).

Residues 1–16 (MRTLWIVAVLLLGVEG) form the signal peptide. 7 cysteine pairs are disulfide-bonded: Cys42-Cys131, Cys44-Cys60, Cys59-Cys111, Cys65-Cys138, Cys66-Cys104, Cys73-Cys97, and Cys91-Cys102. Residues Tyr43, Gly45, and Gly47 each coordinate Ca(2+). His63 is a catalytic residue. Asp64 is a binding site for Ca(2+). Asp105 is an active-site residue.

Ca(2+) serves as cofactor. In terms of tissue distribution, expressed by the venom gland.

The protein localises to the secreted. The catalysed reaction is a 1,2-diacyl-sn-glycero-3-phosphocholine + H2O = a 1-acyl-sn-glycero-3-phosphocholine + a fatty acid + H(+). In terms of biological role, snake venom phospholipase A2 (PLA2) that shows very low inhibition of ADP-induced platelet aggregation in platelet-rich plasma of human, rabbit and guinea pig. In vivo, shows efficient edema-inducing activities in rat paws. PLA2 catalyzes the calcium-dependent hydrolysis of the 2-acyl groups in 3-sn-phosphoglycerides. This Crotalus viridis viridis (Prairie rattlesnake) protein is Acidic phospholipase A2 Cvv-E6f.